A 150-amino-acid chain; its full sequence is Protein SprT-like (150 aa).

Residues 6–147 (LQKLTEDISE…CGKCRGKIKR (142 aa)) form the SprT-like domain. Residue H67 coordinates Zn(2+). Residue E68 is part of the active site. Residue H71 participates in Zn(2+) binding.

This sequence belongs to the SprT family. Requires Zn(2+) as cofactor.

The protein localises to the cytoplasm. This Bacillus subtilis (strain 168) protein is Protein SprT-like (ydcK).